A 265-amino-acid polypeptide reads, in one-letter code: Metal-activated transcriptional activator protein AMT1 (265 aa).

The copper-fist DNA-binding region spans methionine 1 to proline 40. Residues cysteine 11, cysteine 14, cysteine 23, and histidine 25 each coordinate Zn(2+). Positions arginine 103 to alanine 129 are disordered. Low complexity predominate over residues asparagine 119–proline 128.

It localises to the nucleus. Trans-acting regulatory protein that activates transcription of the MT genes (metallothionein) in response to copper or silver ions. The sequence is that of Metal-activated transcriptional activator protein AMT1 (AMT1) from Candida glabrata (strain ATCC 2001 / BCRC 20586 / JCM 3761 / NBRC 0622 / NRRL Y-65 / CBS 138) (Yeast).